A 114-amino-acid polypeptide reads, in one-letter code: uncharacterized protein (114 aa).

Residues 18–29 (TRKRNSHKKVTK) show a composition bias toward basic residues. Disordered regions lie at residues 18-47 (TRKR…RRTG) and 65-108 (SRPR…KLLN). The segment covering 30–41 (RAVEKRKQDSTR) has biased composition (basic and acidic residues).

This is an uncharacterized protein from Homo sapiens (Human).